The chain runs to 171 residues: Serine acetyltransferase (171 aa).

This sequence belongs to the transferase hexapeptide repeat family.

It localises to the cytoplasm. It catalyses the reaction L-serine + acetyl-CoA = O-acetyl-L-serine + CoA. The protein operates within amino-acid biosynthesis; L-cysteine biosynthesis; L-cysteine from L-serine: step 1/2. The sequence is that of Serine acetyltransferase (cysE) from Helicobacter pylori (strain J99 / ATCC 700824) (Campylobacter pylori J99).